The sequence spans 98 residues: Protein S100-A11 (98 aa).

Position 5 is a phosphothreonine (Thr-5). 2 EF-hand domains span residues 12 to 47 and 50 to 85; these read LIAV…AFTK and KDPG…LAIA. Lys-22 carries the N6-acetyllysine modification. Ca(2+) contacts are provided by Ser-26, His-28, Glu-33, Asp-63, Asn-65, Asp-67, Gln-69, and Glu-74.

It belongs to the S-100 family. Homodimer; disulfide-linked. Post-translationally, phosphorylation at Thr-5 significantly suppresses homodimerization and promotes association with NCL/nucleolin which induces nuclear translocation.

The protein localises to the cytoplasm. It localises to the nucleus. Functionally, facilitates the differentiation and the cornification of keratinocytes. This chain is Protein S100-A11 (S100a11), found in Rattus norvegicus (Rat).